Reading from the N-terminus, the 250-residue chain is Probable xyloglucan-specific endo-beta-1,4-glucanase A (250 aa).

An N-terminal signal peptide occupies residues methionine 1–alanine 19. Residue asparagine 72 is glycosylated (N-linked (GlcNAc...) asparagine).

It belongs to the glycosyl hydrolase 12 (cellulase H) family.

Its subcellular location is the secreted. It carries out the reaction xyloglucan + H2O = xyloglucan oligosaccharides.. Functionally, catalyzes endohydrolysis of 1,4-beta-D-glucosidic linkages in xyloglucan with retention of the beta-configuration of the glycosyl residues. Specific for xyloglucan and does not hydrolyze other cell wall components. This Aspergillus terreus (strain NIH 2624 / FGSC A1156) protein is Probable xyloglucan-specific endo-beta-1,4-glucanase A (xgeA).